We begin with the raw amino-acid sequence, 320 residues long: Glucosaminate ammonia-lyase (320 aa).

FAD is bound at residue 36 to 43 (TGMQAGGQ). An intrachain disulfide couples Cys-136 to Cys-139. 285-294 (DVADHVYRQA) provides a ligand contact to FAD.

The protein belongs to the class-II pyridine nucleotide-disulfide oxidoreductase family.

The enzyme catalyses 2-amino-2-deoxy-D-gluconate = 2-dehydro-3-deoxy-D-gluconate + NH4(+). Its function is as follows. Catalyzes the conversion of 2-amino-2-deoxy-D-gluconate (GlcNA) to 2-keto-3-deoxy-D-gluconic acid (KDGA) and ammonia. The protein is Glucosaminate ammonia-lyase of Pseudomonas fluorescens.